The following is a 475-amino-acid chain: ATP synthase subunit beta (475 aa).

154–161 (GGAGVGKT) contacts ATP.

The protein belongs to the ATPase alpha/beta chains family. F-type ATPases have 2 components, CF(1) - the catalytic core - and CF(0) - the membrane proton channel. CF(1) has five subunits: alpha(3), beta(3), gamma(1), delta(1), epsilon(1). CF(0) has three main subunits: a(1), b(2) and c(9-12). The alpha and beta chains form an alternating ring which encloses part of the gamma chain. CF(1) is attached to CF(0) by a central stalk formed by the gamma and epsilon chains, while a peripheral stalk is formed by the delta and b chains.

The protein localises to the cell inner membrane. It catalyses the reaction ATP + H2O + 4 H(+)(in) = ADP + phosphate + 5 H(+)(out). Its function is as follows. Produces ATP from ADP in the presence of a proton gradient across the membrane. The catalytic sites are hosted primarily by the beta subunits. This chain is ATP synthase subunit beta, found in Hyphomonas neptunium (strain ATCC 15444).